The sequence spans 370 residues: CCA-adding enzyme (370 aa).

ATP-binding residues include Gly8 and Arg11. The CTP site is built by Gly8 and Arg11. Residues Asp21 and Asp23 each coordinate Mg(2+). 3 residues coordinate ATP: Arg91, Arg137, and Arg140. 3 residues coordinate CTP: Arg91, Arg137, and Arg140.

It belongs to the tRNA nucleotidyltransferase/poly(A) polymerase family. Bacterial CCA-adding enzyme type 2 subfamily. It depends on Mg(2+) as a cofactor.

It carries out the reaction a tRNA precursor + 2 CTP + ATP = a tRNA with a 3' CCA end + 3 diphosphate. The catalysed reaction is a tRNA with a 3' CCA end + 2 CTP + ATP = a tRNA with a 3' CCACCA end + 3 diphosphate. Functionally, catalyzes the addition and repair of the essential 3'-terminal CCA sequence in tRNAs without using a nucleic acid template. Adds these three nucleotides in the order of C, C, and A to the tRNA nucleotide-73, using CTP and ATP as substrates and producing inorganic pyrophosphate. tRNA 3'-terminal CCA addition is required both for tRNA processing and repair. Also involved in tRNA surveillance by mediating tandem CCA addition to generate a CCACCA at the 3' terminus of unstable tRNAs. While stable tRNAs receive only 3'-terminal CCA, unstable tRNAs are marked with CCACCA and rapidly degraded. The polypeptide is CCA-adding enzyme (Pseudomonas putida (strain W619)).